Here is a 361-residue protein sequence, read N- to C-terminus: MKPTLRRKLEALAERHEELERLLSDPKIASDTDRFRTYSRELAQLAPIATTLAEETRTKADLAAAETLRTDPEMRELAEQEIAIAQAHLTTLDEQLQRLLIPQDPRDECNLFLEVRAGTGGDEAAIFAGNLFRMYTRYAERQRWKVEVESDTPGEHGGYKEIIARIVGRGAYSRLKFESGTHRVQRVPATESQGRIHTSAATVAIIPEADEIADISINPADLKIDTFRSSGAGGQHVNKTESAIRITHLPTGVVVESQTERSQHANRDKAMKRLKAQLIESQRSQQATAEAMTRKLQVGSGDRSQRIRTYNFPQGRITDHRVENLTLYDLPNIIEGDLDPLIDRLRQEHQAEELARLSNAP.

N5-methylglutamine is present on Q235. Residues 283–306 form a disordered region; the sequence is RSQQATAEAMTRKLQVGSGDRSQR.

It belongs to the prokaryotic/mitochondrial release factor family. In terms of processing, methylated by PrmC. Methylation increases the termination efficiency of RF1.

It localises to the cytoplasm. Functionally, peptide chain release factor 1 directs the termination of translation in response to the peptide chain termination codons UAG and UAA. The sequence is that of Peptide chain release factor 1 from Xylella fastidiosa (strain M23).